The chain runs to 181 residues: MSTETLTLIKNSIKSIPDYPKAGIMFRDVTSLMEDPKAYQATIQSLVEKYKQGGFTKIVGTEARGFLFGAPLALELGVGFVPVRKPGKLPRPTIAQTYDLEYGTDTLEIHTDAIVEGDKVLVVDDLLATGGTIEATVKLIRQLGGEVEHAAFVINLPEIGGETRLEGLGLNVYSICEFAGH.

This sequence belongs to the purine/pyrimidine phosphoribosyltransferase family. In terms of assembly, homodimer.

It is found in the cytoplasm. It carries out the reaction AMP + diphosphate = 5-phospho-alpha-D-ribose 1-diphosphate + adenine. It participates in purine metabolism; AMP biosynthesis via salvage pathway; AMP from adenine: step 1/1. In terms of biological role, catalyzes a salvage reaction resulting in the formation of AMP, that is energically less costly than de novo synthesis. In Aliivibrio fischeri (strain ATCC 700601 / ES114) (Vibrio fischeri), this protein is Adenine phosphoribosyltransferase.